A 561-amino-acid chain; its full sequence is Urocanate hydratase (561 aa).

NAD(+) contacts are provided by residues 52 to 53 (GG), Gln130, 176 to 178 (GMG), Glu196, Arg201, 242 to 243 (NA), 263 to 267 (QTSAH), 273 to 274 (YL), and Tyr322. Cys410 is a catalytic residue. Residue Gly492 participates in NAD(+) binding.

This sequence belongs to the urocanase family. NAD(+) is required as a cofactor.

The protein localises to the cytoplasm. The catalysed reaction is 4-imidazolone-5-propanoate = trans-urocanate + H2O. It functions in the pathway amino-acid degradation; L-histidine degradation into L-glutamate; N-formimidoyl-L-glutamate from L-histidine: step 2/3. Functionally, catalyzes the conversion of urocanate to 4-imidazolone-5-propionate. This is Urocanate hydratase from Salmonella typhi.